A 451-amino-acid chain; its full sequence is Tubulin alpha-2 chain (451 aa).

GTP is bound at residue Q11. An N6-acetyllysine modification is found at K40. GTP contacts are provided by E71, G144, T145, T179, N206, and N228. E71 is a Mg(2+) binding site. The active site involves E254.

The protein belongs to the tubulin family. As to quaternary structure, dimer of alpha and beta chains. A typical microtubule is a hollow water-filled tube with an outer diameter of 25 nm and an inner diameter of 15 nM. Alpha-beta heterodimers associate head-to-tail to form protofilaments running lengthwise along the microtubule wall with the beta-tubulin subunit facing the microtubule plus end conferring a structural polarity. Microtubules usually have 13 protofilaments but different protofilament numbers can be found in some organisms and specialized cells. Requires Mg(2+) as cofactor. Undergoes a tyrosination/detyrosination cycle, the cyclic removal and re-addition of a C-terminal tyrosine residue by the enzymes tubulin tyrosine carboxypeptidase (TTCP) and tubulin tyrosine ligase (TTL), respectively. In terms of processing, acetylation of alpha chains at Lys-40 stabilizes microtubules and affects affinity and processivity of microtubule motors. This modification has a role in multiple cellular functions, ranging from cell motility, cell cycle progression or cell differentiation to intracellular trafficking and signaling.

The protein resides in the cytoplasm. Its subcellular location is the cytoskeleton. The catalysed reaction is GTP + H2O = GDP + phosphate + H(+). Tubulin is the major constituent of microtubules, a cylinder consisting of laterally associated linear protofilaments composed of alpha- and beta-tubulin heterodimers. Microtubules grow by the addition of GTP-tubulin dimers to the microtubule end, where a stabilizing cap forms. Below the cap, tubulin dimers are in GDP-bound state, owing to GTPase activity of alpha-tubulin. This Oryza sativa subsp. japonica (Rice) protein is Tubulin alpha-2 chain (TUBA).